The sequence spans 333 residues: uncharacterized protein (333 aa).

The protein to bacterial alkanal monooxygenase alpha and beta chains.

This is an uncharacterized protein from Bacillus subtilis (strain 168).